We begin with the raw amino-acid sequence, 182 residues long: Ribosome hibernation promotion factor (182 aa).

It belongs to the HPF/YfiA ribosome-associated protein family. Long HPF subfamily. As to quaternary structure, interacts with 100S ribosomes.

Its subcellular location is the cytoplasm. Required for dimerization of active 70S ribosomes into 100S ribosomes in stationary phase; 100S ribosomes are translationally inactive and sometimes present during exponential growth. The chain is Ribosome hibernation promotion factor from Streptococcus pyogenes serotype M6 (strain ATCC BAA-946 / MGAS10394).